The following is a 525-amino-acid chain: GMP synthase [glutamine-hydrolyzing] (525 aa).

Residues arginine 9–leucine 207 enclose the Glutamine amidotransferase type-1 domain. Cysteine 86 serves as the catalytic Nucleophile. Residues histidine 181 and glutamate 183 contribute to the active site. Positions tryptophan 208–arginine 400 constitute a GMPS ATP-PPase domain. An ATP-binding site is contributed by serine 235–serine 241.

As to quaternary structure, homodimer.

The enzyme catalyses XMP + L-glutamine + ATP + H2O = GMP + L-glutamate + AMP + diphosphate + 2 H(+). It functions in the pathway purine metabolism; GMP biosynthesis; GMP from XMP (L-Gln route): step 1/1. Its function is as follows. Catalyzes the synthesis of GMP from XMP. The chain is GMP synthase [glutamine-hydrolyzing] from Shigella flexneri.